We begin with the raw amino-acid sequence, 298 residues long: tRNA dimethylallyltransferase (298 aa).

ATP is bound at residue 16-23; sequence GPTASGKS. Residue 18-23 participates in substrate binding; it reads TASGKS. Interaction with substrate tRNA stretches follow at residues 41–44 and 165–169; these read DSMQ and QRIVR.

Belongs to the IPP transferase family. In terms of assembly, monomer. Mg(2+) is required as a cofactor.

The enzyme catalyses adenosine(37) in tRNA + dimethylallyl diphosphate = N(6)-dimethylallyladenosine(37) in tRNA + diphosphate. Its function is as follows. Catalyzes the transfer of a dimethylallyl group onto the adenine at position 37 in tRNAs that read codons beginning with uridine, leading to the formation of N6-(dimethylallyl)adenosine (i(6)A). The protein is tRNA dimethylallyltransferase of Rhizobium rhizogenes (strain K84 / ATCC BAA-868) (Agrobacterium radiobacter).